Reading from the N-terminus, the 351-residue chain is MLDRLKIIKQKYQDLQKLLLNEQNINQKIDILKNLSKLEPTVELFNRYLNLETEFTQIQTILKTQQDQELLLLAHQEKDTILSEKKTTLDQLKILLLPQDPFDKKNVVLEIKGASGGNEANLFAADLLRTYVKYAESKKWKVEILNLNPSIKGGLSSVELLISGKNIYSFLKYESGVHRVQRVPATEAQGRIHTSTAVVLVVPEAEELELKIDWHDIRTDTFNSSGPGGQSVNTTKSAVRLTHIPSGISVACQEGKSQHENKDKAFTILKTRIYNQMLTAKQEEENKHRKNLVGTGERSEKIRTYNYPQNRITDHRIGLTLQKLDIIMEGKLDLVIEPLIHEAQKEQLAQS.

Glutamine 230 is subject to N5-methylglutamine.

It belongs to the prokaryotic/mitochondrial release factor family. In terms of processing, methylated by PrmC. Methylation increases the termination efficiency of RF1.

The protein resides in the cytoplasm. Peptide chain release factor 1 directs the termination of translation in response to the peptide chain termination codons UAG and UAA. The sequence is that of Peptide chain release factor 1 from Onion yellows phytoplasma (strain OY-M).